The chain runs to 1055 residues: Pre-mRNA-splicing factor ATP-dependent RNA helicase-like protein cdc28 (1055 aa).

Residues 67–78 (PREGSRPKENYN) show a composition bias toward basic and acidic residues. A disordered region spans residues 67–184 (PREGSRPKEN…TERLNDLRER (118 aa)). Residues 112-121 (PLKKKSRSKT) are compositionally biased toward basic residues. Positions 122 to 132 (PKREIARRQRD) are enriched in basic and acidic residues. The span at 133–145 (EDEWESDEYEEVV) shows a compositional bias: acidic residues. Basic and acidic residues predominate over residues 163 to 184 (QNHDYEKSSDPETERLNDLRER). In terms of domain architecture, Helicase ATP-binding spans 428 to 592 (LKAINEYQVL…FDEAPVFYVP (165 aa)). 441 to 448 (AETGSGKT) lines the ATP pocket. A DEAH box motif is present at residues 539-542 (DEAH). Residues 617 to 790 (TILQIHTTQP…NIVLLLKSLG (174 aa)) enclose the Helicase C-terminal domain.

This sequence belongs to the DEAD box helicase family. DEAH subfamily. DDX16/PRP8 sub-subfamily.

Its subcellular location is the nucleus. The enzyme catalyses ATP + H2O = ADP + phosphate + H(+). Involved in pre-mRNA splicing. Is required together with ATP and at least one other factor, for the first cleavage-ligation reaction. Functions as a molecular motor in the activation of the precatalytic spliceosome for the first transesterification reaction of pre-mRNA splicing by hydrolyzing ATP to cause the activation of the spliceosome without the occurrence of splicing. This Schizosaccharomyces pombe (strain 972 / ATCC 24843) (Fission yeast) protein is Pre-mRNA-splicing factor ATP-dependent RNA helicase-like protein cdc28 (cdc28).